Reading from the N-terminus, the 297-residue chain is 33 kDa chaperonin (297 aa).

Cystine bridges form between C232–C234 and C266–C269.

The protein belongs to the HSP33 family. Post-translationally, under oxidizing conditions two disulfide bonds are formed involving the reactive cysteines. Under reducing conditions zinc is bound to the reactive cysteines and the protein is inactive.

It is found in the cytoplasm. Functionally, redox regulated molecular chaperone. Protects both thermally unfolding and oxidatively damaged proteins from irreversible aggregation. Plays an important role in the bacterial defense system toward oxidative stress. This is 33 kDa chaperonin from Pseudomonas paraeruginosa (strain DSM 24068 / PA7) (Pseudomonas aeruginosa (strain PA7)).